Reading from the N-terminus, the 161-residue chain is Regulator of ribonuclease activity A (161 aa).

The protein belongs to the RraA family. Homotrimer. Binds to both RNA-binding sites in the C-terminal region of Rne and to RhlB.

The protein localises to the cytoplasm. Functionally, globally modulates RNA abundance by binding to RNase E (Rne) and regulating its endonucleolytic activity. Can modulate Rne action in a substrate-dependent manner by altering the composition of the degradosome. Modulates RNA-binding and helicase activities of the degradosome. The sequence is that of Regulator of ribonuclease activity A from Tolumonas auensis (strain DSM 9187 / NBRC 110442 / TA 4).